Reading from the N-terminus, the 378-residue chain is 4-hydroxy-3-methylbut-2-en-1-yl diphosphate synthase (flavodoxin) (378 aa).

4 residues coordinate [4Fe-4S] cluster: C268, C271, C303, and E310.

It belongs to the IspG family. [4Fe-4S] cluster is required as a cofactor.

The enzyme catalyses (2E)-4-hydroxy-3-methylbut-2-enyl diphosphate + oxidized [flavodoxin] + H2O + 2 H(+) = 2-C-methyl-D-erythritol 2,4-cyclic diphosphate + reduced [flavodoxin]. The protein operates within isoprenoid biosynthesis; isopentenyl diphosphate biosynthesis via DXP pathway; isopentenyl diphosphate from 1-deoxy-D-xylulose 5-phosphate: step 5/6. Converts 2C-methyl-D-erythritol 2,4-cyclodiphosphate (ME-2,4cPP) into 1-hydroxy-2-methyl-2-(E)-butenyl 4-diphosphate. This chain is 4-hydroxy-3-methylbut-2-en-1-yl diphosphate synthase (flavodoxin), found in Corynebacterium glutamicum (strain ATCC 13032 / DSM 20300 / JCM 1318 / BCRC 11384 / CCUG 27702 / LMG 3730 / NBRC 12168 / NCIMB 10025 / NRRL B-2784 / 534).